Reading from the N-terminus, the 443-residue chain is Ribosomal protein uS12 methylthiotransferase RimO (443 aa).

The 111-residue stretch at P8–P118 folds into the MTTase N-terminal domain. Residues C17, C53, C82, C151, C155, and C158 each coordinate [4Fe-4S] cluster. The 240-residue stretch at L137–R376 folds into the Radical SAM core domain. The 66-residue stretch at Q378–V443 folds into the TRAM domain.

This sequence belongs to the methylthiotransferase family. RimO subfamily. It depends on [4Fe-4S] cluster as a cofactor.

It is found in the cytoplasm. The catalysed reaction is L-aspartate(89)-[ribosomal protein uS12]-hydrogen + (sulfur carrier)-SH + AH2 + 2 S-adenosyl-L-methionine = 3-methylsulfanyl-L-aspartate(89)-[ribosomal protein uS12]-hydrogen + (sulfur carrier)-H + 5'-deoxyadenosine + L-methionine + A + S-adenosyl-L-homocysteine + 2 H(+). Functionally, catalyzes the methylthiolation of an aspartic acid residue of ribosomal protein uS12. This is Ribosomal protein uS12 methylthiotransferase RimO from Pseudomonas putida (strain W619).